We begin with the raw amino-acid sequence, 41 residues long: U-megalopygitoxin(4)-Mo5 (41 aa).

Positions 1-23 (MKCSLLLVVFAAMVALFAAGTNA) are cleaved as a signal peptide.

It belongs to the caterpillar 4 family. As to expression, expressed by the venom apparatus.

The protein localises to the secreted. In terms of biological role, probable toxin. In Megalopyge opercularis (Southern flannel moth), this protein is U-megalopygitoxin(4)-Mo5.